The chain runs to 462 residues: Arginine-specific demethylase JMJ20 (462 aa).

The JmjC domain maps to 115–287 (VKEYPDYTAY…WVWDLLWKDY (173 aa)). Fe cation is bound by residues histidine 177, aspartate 179, and histidine 255.

The protein belongs to the JARID1 histone demethylase family. Fe(2+) is required as a cofactor. Mostly expressed in leaves, and, to a lower extent, in inflorescences, roots, siliques and stems.

The protein localises to the nucleus. The catalysed reaction is N(omega),N(omega)-dimethyl-L-arginyl-[protein] + 2-oxoglutarate + O2 = N(omega)-methyl-L-arginyl-[protein] + formaldehyde + succinate + CO2. In terms of biological role, histone demethylase that demethylates 'Arg-3' (H4R3me) of histone H4 with a specific activity for H4R3me2. Involved in the positive regulation of gene expression. Together with JMJ22, positively regulates seed germination by promoting the removal of repressive histone arginine methylations (e.g. H4R3me2) at GA3ox1 and GA3ox2 to trigger gibberellic acid (GA) biosynthesis. This is Arginine-specific demethylase JMJ20 from Arabidopsis thaliana (Mouse-ear cress).